The chain runs to 617 residues: RNA polymerase sigma factor RpoD (617 aa).

The interval Asn192–Asn222 is disordered. The span at Asn198–Ile216 shows a compositional bias: acidic residues. The segment at Met383–Thr453 is sigma-70 factor domain-2. Positions Asp407 to Gln410 match the Interaction with polymerase core subunit RpoC motif. Residues Glu462–Ser538 form a sigma-70 factor domain-3 region. Residues Val551–His604 form a sigma-70 factor domain-4 region. The H-T-H motif DNA-binding region spans Leu577 to Ala596.

Belongs to the sigma-70 factor family. RpoD/SigA subfamily. Interacts transiently with the RNA polymerase catalytic core.

It localises to the cytoplasm. Sigma factors are initiation factors that promote the attachment of RNA polymerase to specific initiation sites and are then released. This sigma factor is the primary sigma factor during exponential growth. This is RNA polymerase sigma factor RpoD from Buchnera aphidicola subsp. Schizaphis graminum (strain Sg).